A 390-amino-acid polypeptide reads, in one-letter code: Centrosomal protein of 44 kDa (390 aa).

The binds with microtubules and centrioles stretch occupies residues 11-195 (RNLEQVLRLL…ISEDTLSPIT (185 aa)). Positions 233-267 (EITALQTMLAECQEKLKELTLIEKRLDCLEQKMKG) form a coiled coil. The disordered stretch occupies residues 323–347 (KNKVGRPASIPLSSRYSTASSDSTP). Residues S331 and S345 each carry the phosphoserine modification. A compositionally biased stretch (low complexity) spans 335 to 345 (SSRYSTASSDS). Phosphothreonine is present on T346. The stretch at 361–385 (SEETTIQKMERMKKMFEETAELLKC) forms a coiled coil.

As to quaternary structure, interacts with CROCC. Interacts with POC1B; the interaction is direct and recruits POC1B to centriolar microtubules. Binds to centriolar microtubules.

It is found in the cytoplasm. The protein resides in the cytoskeleton. The protein localises to the microtubule organizing center. It localises to the centrosome. Its subcellular location is the centriole. It is found in the spindle pole. The protein resides in the midbody. In terms of biological role, centriole-enriched microtubule-binding protein involved in centriole biogenesis. In collaboration with CEP295 and POC1B, is required for the centriole-to-centrosome conversion by ensuring the formation of bona fide centriole wall. Functions as a linker component that maintains centrosome cohesion. Associates with CROCC and regulates its stability and localization to the centrosome. This Macaca fascicularis (Crab-eating macaque) protein is Centrosomal protein of 44 kDa (CEP44).